The sequence spans 442 residues: Protein UNUSUAL FLORAL ORGANS (442 aa).

The interval 1 to 85 is interaction with SKP1A; sequence MDSTVFINNP…RFYSLLFSNT (85 aa). One can recognise an F-box domain in the interval 44–90; that stretch reads GRIWSKLPPPLLDRVIAFLPPPAFFRTRCVCKRFYSLLFSNTFLETY.

Part of a putative SCF (ASK/Cullin/F-box) ubiquitin ligase complex. Interacts with SKP1A/ASK1, SKP1B/ASK2 and ASK11.

It is found in the nucleus. Its pathway is protein modification; protein ubiquitination. Component of SCF(ASK-cullin-F-box) E3 ubiquitin ligase complexes, which may mediate the ubiquitination and subsequent proteasomal degradation of target proteins. Considered as a meristem identity factor required for normal growth of the young floral meristem. Acts together with LEAFY to positively regulate the B class floral homeotic genes APETALA3 and PISTILLATA. In this way, operates as a region-specific regulator for petal and stamen development. Alternatively, may play a role as a negative regulator of the C class floral homeotic genes. Interacts together with the SKP1-like protein ASK1 to form a ubiquitin E3 ligase complex and could indirectly promote the ubiquitination and degradation of specific proteins controlling the floral primordia development like repressors of B class floral homeotic genes. This is Protein UNUSUAL FLORAL ORGANS (UFO) from Arabidopsis thaliana (Mouse-ear cress).